The chain runs to 61 residues: Cytotoxin 2 (61 aa).

4 cysteine pairs are disulfide-bonded: C3/C22, C15/C39, C43/C54, and C55/C60.

Belongs to the three-finger toxin family. Short-chain subfamily. Type IB cytotoxin sub-subfamily. As to expression, expressed by the venom gland.

The protein resides in the secreted. Functionally, this protein lyses red blood cells, has cytotoxic activity and induces hypotension, but is not neurotoxic. In addition, it induces direct paralysis of the muscle fiber. The chain is Cytotoxin 2 from Hemachatus haemachatus (Rinkhals).